Reading from the N-terminus, the 77-residue chain is Cell division topological specificity factor (77 aa).

It belongs to the MinE family.

In terms of biological role, prevents the cell division inhibition by proteins MinC and MinD at internal division sites while permitting inhibition at polar sites. This ensures cell division at the proper site by restricting the formation of a division septum at the midpoint of the long axis of the cell. The chain is Cell division topological specificity factor from Helicobacter pylori (strain Shi470).